Reading from the N-terminus, the 1993-residue chain is MALIVHLKTVSELRGRADRIAKVTFRGQSFYSRVLENCEDVADFDETFRWPVASSIDRNEVLEIQIFNYSKVFSNKLIGTFRMVLQKVVEENRVEVSDTLIDDNNAIIKTSLSMEVRYQAADGTVGPWDDGDFLGDESLQEEEKDSQETDGLLPGSRPSTRTPGEKSFRSKGKEKTKGGRDGEHKAGRSVFSAMKLGKTRSHKEEPQRQDEPAVLEMEDLDHLAIRLGDGLDPDSVSLASVTALTSNVSNKRSKPDIKMEPSAGRPMDYQVSITVIEARQLVGLNMDPVVCVEVGDDKKYTSMKESTNCPYYNEYFVFDFHVSPDVMFDKIIKISVIHSKNLLRSGTLVGSFKMDVGTVYSQPEHQFHHKWAILSDPDDISAGLKGYVKCDVAVVGKGDNIKTPHKANETDEDDIEGNLLLPEGVPPERQWARFYVKIYRAEGLPRMNTSLMANVKKAFIGENKDLVDPYVQVFFAGQKGKTSVQKSSYEPLWNEQVVFTDLFPPLCKRMKVQIRDSDKVNDVAIGTHFIDLRKISNDGDKGFLPTLGPAWVNMYGSTRNYTLLDEHQDLNEGLGEGVSFRARLMLGLAVEILDTSNPELTSSTEVQVEQATPVSESCTGRMEEFFLFGAFLEASMIDRKNGDKPVTFEVTIGNYGNEVDGTSRPQRPRPRKEPGDEEEVDLIQNSSDDEGDEAGDLASVSSTPPMRPQITDRNYFHLPYLERKPCIYIKSWWPDQRRRLYNANIMDHIADKLEEGLNDVQEMIKTEKSYPERRLRGVLEELSCGCHRFLSLSDKDQGHSSRTRLDRERLKSCMRELESMGQQAKSLRAQVKRHTVRDKLRLCQNFLQKLRFLADEPQHSIPDVFIWMMSNNKRIAYARVPSKDLLFSIVEEELGKDCAKVKTLFLKLPGKRGFGSAGWTVQAKLELYLWLGLSKQRKDFLCGLPCGFEEVKAAQGLGLHSFPPISLVYTKKQTFQLRAHMYQARSLFAADSTGLSDPFARVFFINQSQCTEVLNETLCPTWDQMLVFDNLELYGEAHELRDDPPIIVIEIYDQDSMGKADFMGRTFAKPLVKMADEAYCPPRFPPQLEYYQIYRGNATAGDLLAAFELLQIGPSGKADLPPINGPVDMDRGPIMPVPVGIRPVLSKYRVEVLFWGLRDLKRVNLAQVDRPRVDIECAGKGVQSSLIHNYKKNPNFNTLVKWFEVDLPENELLHPPLNIRVVDCRAFGRYTLVGSHAVSSLRRFIYRPPDRSAANWNTTGEVVVSMEPEVPVKKLETLVKLDATSDAVVKVDVAEDEKERKKKKKKGPSEEAEEEEPDESMLDWWSKYFASIDTMKEQLRQHETSGIDLEEKEEMDSTEGLKGPVKNKEKSRAAKEEKKKKNQNPGPGQGSEAPEKKKAKIDELKVYPKELESEFDNFEDWLHTFNLLRGKTGDDEDGSTEEERIVGRFKGSLCVYKVPLPEDVSREAGYDPTYGMFQGIPSNDPINVLVRIYVVRATDLHPADINGKADPYIAIKLGKTDIRDKENYISKQLNPVFGKSFDIEASFPMESMLTVAVYDWDLVGTDDLIGETKIDLENRFYSKHRATCGIAQTYSIHGYNIWRDPMKPSQILTRLCKEGKVDGPHFGPHGRVKVANRVFTGPSEIEDENGQRKPTDEHVALSALRHWEDIPRVGCRLVPEHVETRPLLNPDKPGIEQGRLELWVDMFPMDMPAPGTPLDISPRKPKKYELRVIVWNTDEVVLEDDDFFTGEKSSDIFVRGWLKGQQEDKQDTDVHYHSLTGEGNFNWRYLFPFDYLAAEEKIVMSKKESMFSWDETEYKIPARLTLQIWDADHFSADDFLGAIELDLNRFPRGAKTAKQCTMEMATGEVDVPLVSIFKQKRVKGWWPLLARNENDEFELTGKVEAELHLLTAEEAEKNPVGLARNEPDPLEKPNRPDTAFVWFLNPLKSIKYLICTRYKWLIIKIVLALLGLLMLALFLYSLPGYMVKKLLGA.

The C2 1 domain maps to 1–98; that stretch reads MALIVHLKTV…VEENRVEVSD (98 aa). Topologically, residues 1–1959 are cytoplasmic; sequence MALIVHLKTV…IKYLICTRYK (1959 aa). A disordered region spans residues 127–212; that stretch reads PWDDGDFLGD…KEEPQRQDEP (86 aa). The segment covering 129 to 145 has biased composition (acidic residues); that stretch reads DDGDFLGDESLQEEEKD. Basic and acidic residues-rich tracts occupy residues 163-186 and 202-211; these read PGEK…EHKA and HKEEPQRQDE. 2 C2 domains span residues 251–372 and 415–546; these read KRSK…HKWA and IEGN…FLPT. Residues 654–708 form a disordered region; that stretch reads NYGNEVDGTSRPQRPRPRKEPGDEEEVDLIQNSSDDEGDEAGDLASVSSTPPMRP. Positions 675–695 are enriched in acidic residues; sequence GDEEEVDLIQNSSDDEGDEAG. The stretch at 807 to 836 forms a coiled coil; the sequence is RERLKSCMRELESMGQQAKSLRAQVKRHTV. C2 domains are found at residues 959 to 1084 and 1131 to 1257; these read LHSF…PPRF and RGPI…ANWN. Ca(2+) contacts are provided by aspartate 991, aspartate 997, aspartate 1053, aspartate 1055, and aspartate 1061. 2 disordered regions span residues 1294 to 1318 and 1339 to 1398; these read AEDE…EEPD and LRQH…EKKK. The segment covering 1348–1357 has biased composition (acidic residues); the sequence is DLEEKEEMDS. Positions 1366–1379 are enriched in basic and acidic residues; the sequence is KNKEKSRAAKEEKK. 2 consecutive C2 domains span residues 1460-1589 and 1710-1861; these read LPED…ATCG and DMPA…KQCT. Positions 1504, 1510, 1559, 1561, 1567, 1832, 1835, and 1838 each coordinate Ca(2+). Residues 1960 to 1980 traverse the membrane as a helical segment; sequence WLIIKIVLALLGLLMLALFLY. The Extracellular portion of the chain corresponds to 1981–1993; the sequence is SLPGYMVKKLLGA.

This sequence belongs to the ferlin family. Interacts with SNAP25; the interaction is direct. Interacts with STX1; the interaction is direct. Interacts with RAB8B. Ca(2+) is required as a cofactor. Isoform 1 is expressed in the cochlea and brain. Expressed in cerebellum (Purkinje cells), hippocampus (granule cells of the dentate gyrus and in pyramidal cells of the CA1-CA3 region) and cortex (stellate and pyramidal cells). Expressed in hair cells of vestibular organs such as the saccule, utricle and crista ampullari. Expressed in the cochlear inner and outer cells (IHCs and OHCs) (at protein level). Expressed in brain: brainstem, cerebellum (granules cells and Purkinje cell layer), cortex (layers IV and V), inferior colliculus, superior colliculus and hippocampus (granule cells of the dentate gyrus and in pyramidal cells of the CA1-CA3 region).

The protein resides in the cytoplasmic vesicle. It is found in the secretory vesicle. Its subcellular location is the synaptic vesicle membrane. It localises to the basolateral cell membrane. The protein localises to the endoplasmic reticulum membrane. The protein resides in the golgi apparatus membrane. It is found in the presynaptic cell membrane. Its subcellular location is the cell membrane. Functionally, key calcium ion sensor involved in the Ca(2+)-triggered synaptic vesicle-plasma membrane fusion and in the control of neurotransmitter release at these output synapses. Interacts in a calcium-dependent manner to the presynaptic SNARE proteins at ribbon synapses of cochlear inner hair cells (IHCs) to trigger exocytosis of neurotransmitter. Also essential to synaptic exocytosis in immature outer hair cells (OHCs). May also play a role within the recycling of endosomes. The protein is Otoferlin (Otof) of Rattus norvegicus (Rat).